Consider the following 259-residue polypeptide: 2,3-dihydroxy-2,3-dihydro-p-cumate dehydrogenase (259 aa).

18–42 (VTGGAHGIGLGIVERLLGLGARVTA) is a binding site for NAD(+). Tyr163 functions as the Proton acceptor in the catalytic mechanism.

This sequence belongs to the short-chain dehydrogenases/reductases (SDR) family.

It carries out the reaction (2R,3S)-2,3-dihydroxy-2,3-dihydro-p-cumate + NAD(+) = 2,3-dihydroxy-p-cumate + NADH + H(+). Its pathway is aromatic compound metabolism; p-cumate degradation; acetaldehyde and pyruvate from p-cumate: step 2/7. In Pseudomonas putida (strain ATCC 700007 / DSM 6899 / JCM 31910 / BCRC 17059 / LMG 24140 / F1), this protein is 2,3-dihydroxy-2,3-dihydro-p-cumate dehydrogenase (cmtB).